We begin with the raw amino-acid sequence, 613 residues long: MSSIIQLLPDHVANQIAAGEVVQRPASVVKELLENAIDAGASDIKLICKEAGKVLIQVIDNGKGMSVTDARLCFERHATSKIRQAEDLFDLHTKGFRGEALASIAAIAHVEMKTKQDQEELGTHIIIEGSKFVSQDVAVLPKGTSFLVKNLFFNIPARRNFLKSDIVELRHIIDEFQRVALAHHNIHFTFYHNGSELFNLPQSNVRQRIVNIFSGKTNEKLVPIQENTDILSIQGFIGKPEFAKKSKGEQFFFVNDRFIKSGYLHHAIMNAYEGLLRDGAQPSYFLYLDVPPHTIDINIHPTKTEIKFDDEQALYAILRSATKHSLGQFNVAPVLDFERDFNLDTPYSYQNKEAETPTIQVDSNFNPFQEEKKQSNFSYKPKTEKQPHWESLYVGLDTKSIDLDEMSFESETVTSSLFSDSEVEKAPTTTYQIHKKYIVNPIKSGMLIIDQQRAHQRILYEQFLTNITIHQANSQQLLFPVTLYFSGNEMALIQEIKQSLESTGFVFEALNKDSIVISGLPVTVSESEASIVLEQLVSDLQQEVPDSSFSQMDSMAKSMAKSLAVKTGTYLTEEAQVNLVNNLFACKEATVSPFNKTTFITLSVEDLDKKFSI.

It belongs to the DNA mismatch repair MutL/HexB family.

This protein is involved in the repair of mismatches in DNA. It is required for dam-dependent methyl-directed DNA mismatch repair. May act as a 'molecular matchmaker', a protein that promotes the formation of a stable complex between two or more DNA-binding proteins in an ATP-dependent manner without itself being part of a final effector complex. The chain is DNA mismatch repair protein MutL from Flavobacterium psychrophilum (strain ATCC 49511 / DSM 21280 / CIP 103535 / JIP02/86).